A 460-amino-acid polypeptide reads, in one-letter code: Ribulose bisphosphate carboxylase large chain (460 aa).

Lys4 is subject to N6,N6,N6-trimethyllysine. Asn113 and Thr163 together coordinate substrate. The active-site Proton acceptor is Lys165. A substrate-binding site is contributed by Lys167. The Mg(2+) site is built by Lys191, Asp193, and Glu194. At Lys191 the chain carries N6-carboxylysine. His284 serves as the catalytic Proton acceptor. Arg285, His317, and Ser369 together coordinate substrate.

This sequence belongs to the RuBisCO large chain family. Type I subfamily. Heterohexadecamer of 8 large chains and 8 small chains. The cofactor is Mg(2+).

The protein resides in the plastid. Its subcellular location is the chloroplast. The enzyme catalyses 2 (2R)-3-phosphoglycerate + 2 H(+) = D-ribulose 1,5-bisphosphate + CO2 + H2O. It carries out the reaction D-ribulose 1,5-bisphosphate + O2 = 2-phosphoglycolate + (2R)-3-phosphoglycerate + 2 H(+). RuBisCO catalyzes two reactions: the carboxylation of D-ribulose 1,5-bisphosphate, the primary event in carbon dioxide fixation, as well as the oxidative fragmentation of the pentose substrate in the photorespiration process. Both reactions occur simultaneously and in competition at the same active site. In Cunninghamia lanceolata (China fir), this protein is Ribulose bisphosphate carboxylase large chain.